Reading from the N-terminus, the 155-residue chain is Protein-export protein SecB (155 aa).

It belongs to the SecB family. Homotetramer, a dimer of dimers. One homotetramer interacts with 1 SecA dimer.

Its subcellular location is the cytoplasm. Functionally, one of the proteins required for the normal export of preproteins out of the cell cytoplasm. It is a molecular chaperone that binds to a subset of precursor proteins, maintaining them in a translocation-competent state. It also specifically binds to its receptor SecA. The protein is Protein-export protein SecB of Albidiferax ferrireducens (strain ATCC BAA-621 / DSM 15236 / T118) (Rhodoferax ferrireducens).